Consider the following 424-residue polypeptide: MISNNLIEQLEQRGLIAQVTDKTRLSERLYQGQISLYCGFDPTADSLHLGHLVPLLCLKRFQLVGHKPIILVGGATGLIGDPSFKAGERKLNDIDTVHQWVNKIREQVEPFLDFDCGNHSATIENNHNWFSHINVLTFLRDIGKHFSVNQMMNKEAVKQRLSRTDSGISFTEFSYNLLQSYDFAYLNKNHKVELQIGGSDQWGNITSGIDLTHRLNRRSVYGLTVPLITKADGSKFGKTEGNTIWLDAKKTSPYQFYQFWLNTADADVYRFLKLFTFIDLNAIDALEEQDKKNDKAPQAQYVLANEITEMVHGKEGLSAAQRITASLFTGNPHDMREEDFSQLAQDGIPIVRLETDAELQKALVSAQLAPSRSQARTLIQSSSISVNGKKQLKPEYIFTSEDRLLDRYTLLRRGKKYYCLIIWQ.

Residue tyrosine 37 coordinates L-tyrosine. The 'HIGH' region motif lies at 42-51; the sequence is PTADSLHLGH. Positions 175 and 179 each coordinate L-tyrosine. The 'KMSKS' region signature appears at 235 to 239; the sequence is KFGKT. Lysine 238 serves as a coordination point for ATP. The region spanning 357-414 is the S4 RNA-binding domain; it reads AELQKALVSAQLAPSRSQARTLIQSSSISVNGKKQLKPEYIFTSEDRLLDRYTLLRRG.

This sequence belongs to the class-I aminoacyl-tRNA synthetase family. TyrS type 1 subfamily. Homodimer.

The protein resides in the cytoplasm. It carries out the reaction tRNA(Tyr) + L-tyrosine + ATP = L-tyrosyl-tRNA(Tyr) + AMP + diphosphate + H(+). Functionally, catalyzes the attachment of tyrosine to tRNA(Tyr) in a two-step reaction: tyrosine is first activated by ATP to form Tyr-AMP and then transferred to the acceptor end of tRNA(Tyr). This Hamiltonella defensa subsp. Acyrthosiphon pisum (strain 5AT) protein is Tyrosine--tRNA ligase.